Consider the following 153-residue polypeptide: Large ribosomal subunit protein uL30 (153 aa).

It belongs to the universal ribosomal protein uL30 family. As to quaternary structure, part of the 50S ribosomal subunit.

This chain is Large ribosomal subunit protein uL30, found in Metallosphaera sedula (strain ATCC 51363 / DSM 5348 / JCM 9185 / NBRC 15509 / TH2).